Reading from the N-terminus, the 508-residue chain is Methionine--tRNA ligase (508 aa).

Positions 12-22 (YYVNDVAHIGH) match the 'HIGH' region motif. A 'KMSKS' region motif is present at residues 295 to 299 (KISKS). ATP is bound at residue lysine 298.

Belongs to the class-I aminoacyl-tRNA synthetase family. MetG type 2B subfamily. In terms of assembly, monomer.

Its subcellular location is the cytoplasm. It carries out the reaction tRNA(Met) + L-methionine + ATP = L-methionyl-tRNA(Met) + AMP + diphosphate. Functionally, is required not only for elongation of protein synthesis but also for the initiation of all mRNA translation through initiator tRNA(fMet) aminoacylation. The chain is Methionine--tRNA ligase (metG) from Rickettsia prowazekii (strain Madrid E).